We begin with the raw amino-acid sequence, 128 residues long: Large ribosomal subunit protein bL17 (128 aa).

It belongs to the bacterial ribosomal protein bL17 family. Part of the 50S ribosomal subunit. Contacts protein L32.

The protein is Large ribosomal subunit protein bL17 of Edwardsiella ictaluri (strain 93-146).